A 300-amino-acid chain; its full sequence is Ferredoxin/F(420)H(2)-dependent CoB-CoM heterodisulfide reductase subunit B (300 aa).

It belongs to the HdrB family. As to quaternary structure, the ferredoxin/F(420)H(2)-dependent CoB-CoM heterodisulfide reductase is composed of three subunits; HdrA2, HdrB2 and HdrC2. It depends on [4Fe-4S] cluster as a cofactor.

The protein resides in the cytoplasm. The enzyme catalyses coenzyme B + coenzyme M + 2 oxidized [2Fe-2S]-[ferredoxin] = coenzyme M-coenzyme B heterodisulfide + 2 reduced [2Fe-2S]-[ferredoxin] + 2 H(+). It catalyses the reaction coenzyme B + 2 oxidized coenzyme F420-(gamma-L-Glu)(n) + coenzyme M + 2 reduced [2Fe-2S]-[ferredoxin] + 4 H(+) = coenzyme M-coenzyme B heterodisulfide + 2 reduced coenzyme F420-(gamma-L-Glu)(n) + 2 oxidized [2Fe-2S]-[ferredoxin]. It functions in the pathway cofactor metabolism; coenzyme M-coenzyme B heterodisulfide reduction; coenzyme B and coenzyme M from coenzyme M-coenzyme B heterodisulfide: step 1/1. Part of a complex that catalyzes the reversible reduction of CoM-S-S-CoB to the thiol-coenzymes H-S-CoM (coenzyme M) and H-S-CoB (coenzyme B). Catalyzes the transfer of electrons from ferredoxin to CoM-S-S-CoB during methanogenesis from acetate. Electrons transfer from ferredoxin to CoM-S-S-CoB via HdrA2, HdrC2 and HdrB2. In addition, the complex can use electron bifurcation to direct electron pairs from reduced coenzyme F420 towards the reduction of both ferredoxin and CoB-CoM heterodisulfide. This activity may take place during Fe(III)-dependent anaerobic methane oxidation. The sequence is that of Ferredoxin/F(420)H(2)-dependent CoB-CoM heterodisulfide reductase subunit B from Methanosarcina acetivorans (strain ATCC 35395 / DSM 2834 / JCM 12185 / C2A).